The primary structure comprises 331 residues: Aspartate carbamoyltransferase catalytic subunit (331 aa).

Positions 62 and 63 each coordinate carbamoyl phosphate. Lysine 90 lines the L-aspartate pocket. Positions 112, 145, and 148 each coordinate carbamoyl phosphate. Positions 185 and 246 each coordinate L-aspartate. Carbamoyl phosphate contacts are provided by glycine 287 and proline 288.

The protein belongs to the aspartate/ornithine carbamoyltransferase superfamily. ATCase family. Heterododecamer (2C3:3R2) of six catalytic PyrB chains organized as two trimers (C3), and six regulatory PyrI chains organized as three dimers (R2).

It carries out the reaction carbamoyl phosphate + L-aspartate = N-carbamoyl-L-aspartate + phosphate + H(+). It functions in the pathway pyrimidine metabolism; UMP biosynthesis via de novo pathway; (S)-dihydroorotate from bicarbonate: step 2/3. Functionally, catalyzes the condensation of carbamoyl phosphate and aspartate to form carbamoyl aspartate and inorganic phosphate, the committed step in the de novo pyrimidine nucleotide biosynthesis pathway. The chain is Aspartate carbamoyltransferase catalytic subunit from Synechocystis sp. (strain ATCC 27184 / PCC 6803 / Kazusa).